We begin with the raw amino-acid sequence, 666 residues long: tRNA 5-methylaminomethyl-2-thiouridine biosynthesis bifunctional protein MnmC (666 aa).

The interval 1 to 245 (MKQYAIQPAT…KREMLCGVME (245 aa)) is tRNA (mnm(5)s(2)U34)-methyltransferase. Residues 270–666 (IGGGIASALL…RKLLKGKAVK (397 aa)) are FAD-dependent cmnm(5)s(2)U34 oxidoreductase.

It in the N-terminal section; belongs to the methyltransferase superfamily. tRNA (mnm(5)s(2)U34)-methyltransferase family. The protein in the C-terminal section; belongs to the DAO family. Requires FAD as cofactor.

The protein localises to the cytoplasm. The catalysed reaction is 5-aminomethyl-2-thiouridine(34) in tRNA + S-adenosyl-L-methionine = 5-methylaminomethyl-2-thiouridine(34) in tRNA + S-adenosyl-L-homocysteine + H(+). In terms of biological role, catalyzes the last two steps in the biosynthesis of 5-methylaminomethyl-2-thiouridine (mnm(5)s(2)U) at the wobble position (U34) in tRNA. Catalyzes the FAD-dependent demodification of cmnm(5)s(2)U34 to nm(5)s(2)U34, followed by the transfer of a methyl group from S-adenosyl-L-methionine to nm(5)s(2)U34, to form mnm(5)s(2)U34. The sequence is that of tRNA 5-methylaminomethyl-2-thiouridine biosynthesis bifunctional protein MnmC from Salmonella paratyphi B (strain ATCC BAA-1250 / SPB7).